The primary structure comprises 438 residues: Dihydrolipoyllysine-residue acetyltransferase component of pyruvate dehydrogenase complex (438 aa).

The 76-residue stretch at 1–76 (MFKVKFADIG…KVGDVVMEIE (76 aa)) folds into the Lipoyl-binding domain. Residue Lys42 is modified to N6-lipoyllysine. The Peripheral subunit-binding (PSBD) domain maps to 132–169 (KATPLARKVAADLNIDLSLVTPTGPNQRILVADIKNHQ). Polar residues predominate over residues 172-181 (STQLASQPIS). The interval 172-192 (STQLASQPISQPAPTPSPSAH) is disordered. His411 is a catalytic residue.

Belongs to the 2-oxoacid dehydrogenase family. Forms a 24-polypeptide structural core with octahedral symmetry. Requires (R)-lipoate as cofactor.

It catalyses the reaction N(6)-[(R)-dihydrolipoyl]-L-lysyl-[protein] + acetyl-CoA = N(6)-[(R)-S(8)-acetyldihydrolipoyl]-L-lysyl-[protein] + CoA. Functionally, the pyruvate dehydrogenase complex catalyzes the overall conversion of pyruvate to acetyl-CoA and CO(2). It contains multiple copies of three enzymatic components: pyruvate dehydrogenase (E1), dihydrolipoamide acetyltransferase (E2) and lipoamide dehydrogenase (E3). This Mycoplasma capricolum subsp. capricolum (strain California kid / ATCC 27343 / NCTC 10154) protein is Dihydrolipoyllysine-residue acetyltransferase component of pyruvate dehydrogenase complex (pdhC).